The chain runs to 525 residues: Calcium uptake protein 1 homolog, mitochondrial (525 aa).

A disordered region spans residues 109–146; that stretch reads ADAGQRPSSAADVNGEDKSSESESEDSEDEEAGSDLHL. The segment covering 130 to 141 has biased composition (acidic residues); it reads SESEDSEDEEAG. EF-hand domains lie at 268–303 and 459–494; these read ISRR…VRQQ and LSDH…RVQR. D281, N283, D285, D287, E292, D472, N474, D476, Q478, and E483 together coordinate Ca(2+).

The protein belongs to the MICU1 family. MICU1 subfamily.

The protein localises to the mitochondrion intermembrane space. Its subcellular location is the mitochondrion inner membrane. Functionally, calcium sensor of the mitochondrial calcium uniporter (MCU) channel, which senses calcium level via its EF-hand domains. At low calcium levels, MICU1 occludes the pore of the MCU channel, preventing mitochondrial calcium uptake. At higher calcium levels, calcium-binding to MICU1 induces a conformational change that weakens MCU-MICU1 interactions and moves MICU1 away from the pore, allowing calcium permeation through the MCU channel. Also required to protect against manganese toxicity by preventing manganese uptake by MCU. During development, required in alpha/beta or gamma mushroom body neurons to support olfactory intermediate-term memory in the adult. In Drosophila melanogaster (Fruit fly), this protein is Calcium uptake protein 1 homolog, mitochondrial.